Here is a 411-residue protein sequence, read N- to C-terminus: Proline-responsive transcriptional activator PutR (411 aa).

The protein belongs to the CdaR family.

Activates transcription of the putBCP operon. Requires proline as a coactivator. This Bacillus subtilis (strain 168) protein is Proline-responsive transcriptional activator PutR.